The sequence spans 1198 residues: Tetratricopeptide repeat protein 17 (1198 aa).

A TPR 1 repeat occupies 295–328 (FTSYYTLGNIYAMLGEYNHSVLCYDHALQAKPGF). A coiled-coil region spans residues 340 to 382 (CQQKLEQKLEAQHRSLQRTLNELKEYQKQHDHYLRQQEILEKH). TPR repeat units follow at residues 619 to 652 (WLIL…APVQ) and 689 to 722 (PLTF…TTRC). 2 disordered regions span residues 771 to 825 (PQSL…KSEE) and 903 to 924 (KKPK…QAEN). Positions 903-914 (KKPKGDHKKPPG) are enriched in basic residues. TPR repeat units follow at residues 1071–1105 (SWVL…APHQ), 1108–1141 (DVPL…APHF), and 1142–1175 (AVNH…QPEF).

Belongs to the TTC17 family. Interacts with CATIP. Expressed in germ cells as well as in somatic cells of the testis (at protein level). Ubiquitous.

The protein localises to the cytoplasm. Its subcellular location is the cell membrane. It is found in the cytoskeleton. In terms of biological role, plays a role in primary ciliogenesis by modulating actin polymerization. This Rattus norvegicus (Rat) protein is Tetratricopeptide repeat protein 17 (Ttc17).